A 345-amino-acid polypeptide reads, in one-letter code: Small ribosomal subunit biogenesis GTPase RsgA (345 aa).

The disordered stretch occupies residues 1 to 36 (MSKNKLSKGQERRVQANHQRRLQQRERGAAHWDDQP). Basic and acidic residues predominate over residues 23-34 (QQRERGAAHWDD). The CP-type G domain occupies 103–273 (RSVLTRPDVY…LIDSPGVREL (171 aa)). Residues 159 to 162 (NKID) and 213 to 221 (GQSGVGKSS) each bind GTP. Zn(2+) is bound by residues Cys297, Cys302, His304, and Cys310.

The protein belongs to the TRAFAC class YlqF/YawG GTPase family. RsgA subfamily. In terms of assembly, monomer. Associates with 30S ribosomal subunit, binds 16S rRNA. Requires Zn(2+) as cofactor.

The protein resides in the cytoplasm. In terms of biological role, one of several proteins that assist in the late maturation steps of the functional core of the 30S ribosomal subunit. Helps release RbfA from mature subunits. May play a role in the assembly of ribosomal proteins into the subunit. Circularly permuted GTPase that catalyzes slow GTP hydrolysis, GTPase activity is stimulated by the 30S ribosomal subunit. This Sodalis glossinidius (strain morsitans) protein is Small ribosomal subunit biogenesis GTPase RsgA.